The following is an 81-amino-acid chain: Exodeoxyribonuclease 7 small subunit (81 aa).

The protein belongs to the XseB family. As to quaternary structure, heterooligomer composed of large and small subunits.

The protein resides in the cytoplasm. The catalysed reaction is Exonucleolytic cleavage in either 5'- to 3'- or 3'- to 5'-direction to yield nucleoside 5'-phosphates.. Its function is as follows. Bidirectionally degrades single-stranded DNA into large acid-insoluble oligonucleotides, which are then degraded further into small acid-soluble oligonucleotides. This chain is Exodeoxyribonuclease 7 small subunit, found in Pseudomonas syringae pv. syringae (strain B728a).